A 237-amino-acid polypeptide reads, in one-letter code: Large ribosomal subunit protein uL1 (237 aa).

Belongs to the universal ribosomal protein uL1 family. As to quaternary structure, part of the 50S ribosomal subunit.

In terms of biological role, binds directly to 23S rRNA. The L1 stalk is quite mobile in the ribosome, and is involved in E site tRNA release. Functionally, protein L1 is also a translational repressor protein, it controls the translation of the L11 operon by binding to its mRNA. The protein is Large ribosomal subunit protein uL1 of Dehalococcoides mccartyi (strain CBDB1).